The following is a 451-amino-acid chain: Probable D-serine dehydratase (451 aa).

Position 119 is an N6-(pyridoxal phosphate)lysine (lysine 119).

This sequence belongs to the serine/threonine dehydratase family. DsdA subfamily. The cofactor is pyridoxal 5'-phosphate.

The catalysed reaction is D-serine = pyruvate + NH4(+). The polypeptide is Probable D-serine dehydratase (Acidovorax sp. (strain JS42)).